Here is a 395-residue protein sequence, read N- to C-terminus: ATP-dependent RNA helicase eIF4A (395 aa).

N-acetylserine is present on Ser2. A Q motif motif is present at residues 22-50 (YKFDDMELDENLLRGVFGYGFEEPSAIQQ). In terms of domain architecture, Helicase ATP-binding spans 53-222 (IMPIIEGHDV…TKFMRNPVRI (170 aa)). An ATP-binding site is contributed by 66-73 (AQSGTGKT). A Phosphothreonine modification is found at Thr73. Phosphoserine is present on residues Ser77 and Ser129. Thr146 bears the Phosphothreonine mark. Residues 170–173 (DEAD) carry the DEAD box motif. One can recognise a Helicase C-terminal domain in the interval 233–394 (GIKQFYVNVE…ELPSDIATLL (162 aa)).

It belongs to the DEAD box helicase family. eIF4A subfamily. Component of the eIF4F complex, which composition varies with external and internal environmental conditions. It is composed of at least eIF4A, eIF4E and eIF4G.

It localises to the cytoplasm. It carries out the reaction ATP + H2O = ADP + phosphate + H(+). ATP-dependent RNA helicase which is a subunit of the eIF4F complex involved in cap recognition and is required for mRNA binding to ribosome. In the current model of translation initiation, eIF4A unwinds RNA secondary structures in the 5'-UTR of mRNAs which is necessary to allow efficient binding of the small ribosomal subunit, and subsequent scanning for the initiator codon. The sequence is that of ATP-dependent RNA helicase eIF4A (TIF1) from Saccharomyces cerevisiae (strain YJM789) (Baker's yeast).